The chain runs to 317 residues: Aspartate carbamoyltransferase catalytic subunit (317 aa).

Residues R66 and T67 each coordinate carbamoyl phosphate. An L-aspartate-binding site is contributed by K94. Residues R116, H144, and Q147 each contribute to the carbamoyl phosphate site. L-aspartate is bound by residues R177 and R231. 2 residues coordinate carbamoyl phosphate: G272 and P273.

Belongs to the aspartate/ornithine carbamoyltransferase superfamily. ATCase family. Heterododecamer (2C3:3R2) of six catalytic PyrB chains organized as two trimers (C3), and six regulatory PyrI chains organized as three dimers (R2).

The enzyme catalyses carbamoyl phosphate + L-aspartate = N-carbamoyl-L-aspartate + phosphate + H(+). Its pathway is pyrimidine metabolism; UMP biosynthesis via de novo pathway; (S)-dihydroorotate from bicarbonate: step 2/3. Catalyzes the condensation of carbamoyl phosphate and aspartate to form carbamoyl aspartate and inorganic phosphate, the committed step in the de novo pyrimidine nucleotide biosynthesis pathway. The chain is Aspartate carbamoyltransferase catalytic subunit from Rhodopseudomonas palustris (strain BisB5).